Consider the following 188-residue polypeptide: GTP cyclohydrolase 1 (188 aa).

Zn(2+) is bound by residues cysteine 76, histidine 79, and cysteine 148.

The protein belongs to the GTP cyclohydrolase I family. Toroid-shaped homodecamer, composed of two pentamers of five dimers.

It carries out the reaction GTP + H2O = 7,8-dihydroneopterin 3'-triphosphate + formate + H(+). The protein operates within cofactor biosynthesis; 7,8-dihydroneopterin triphosphate biosynthesis; 7,8-dihydroneopterin triphosphate from GTP: step 1/1. The sequence is that of GTP cyclohydrolase 1 from Caldanaerobacter subterraneus subsp. tengcongensis (strain DSM 15242 / JCM 11007 / NBRC 100824 / MB4) (Thermoanaerobacter tengcongensis).